A 103-amino-acid polypeptide reads, in one-letter code: Pyrimidine/purine nucleoside phosphorylase (103 aa).

This sequence belongs to the nucleoside phosphorylase PpnP family.

It carries out the reaction a purine D-ribonucleoside + phosphate = a purine nucleobase + alpha-D-ribose 1-phosphate. The catalysed reaction is adenosine + phosphate = alpha-D-ribose 1-phosphate + adenine. The enzyme catalyses cytidine + phosphate = cytosine + alpha-D-ribose 1-phosphate. It catalyses the reaction guanosine + phosphate = alpha-D-ribose 1-phosphate + guanine. It carries out the reaction inosine + phosphate = alpha-D-ribose 1-phosphate + hypoxanthine. The catalysed reaction is thymidine + phosphate = 2-deoxy-alpha-D-ribose 1-phosphate + thymine. The enzyme catalyses uridine + phosphate = alpha-D-ribose 1-phosphate + uracil. It catalyses the reaction xanthosine + phosphate = alpha-D-ribose 1-phosphate + xanthine. In terms of biological role, catalyzes the phosphorolysis of diverse nucleosides, yielding D-ribose 1-phosphate and the respective free bases. Can use uridine, adenosine, guanosine, cytidine, thymidine, inosine and xanthosine as substrates. Also catalyzes the reverse reactions. In Geobacter sp. (strain M21), this protein is Pyrimidine/purine nucleoside phosphorylase.